We begin with the raw amino-acid sequence, 338 residues long: Tetraacyldisaccharide 4'-kinase (338 aa).

ATP is bound at residue 67–74 (IAGGAGKT).

It belongs to the LpxK family.

The catalysed reaction is a lipid A disaccharide + ATP = a lipid IVA + ADP + H(+). The protein operates within glycolipid biosynthesis; lipid IV(A) biosynthesis; lipid IV(A) from (3R)-3-hydroxytetradecanoyl-[acyl-carrier-protein] and UDP-N-acetyl-alpha-D-glucosamine: step 6/6. In terms of biological role, transfers the gamma-phosphate of ATP to the 4'-position of a tetraacyldisaccharide 1-phosphate intermediate (termed DS-1-P) to form tetraacyldisaccharide 1,4'-bis-phosphate (lipid IVA). The sequence is that of Tetraacyldisaccharide 4'-kinase from Acidovorax sp. (strain JS42).